The chain runs to 208 residues: Mediator of RNA polymerase II transcription subunit 18 (208 aa).

Residue Ser66 is modified to Phosphoserine.

The protein belongs to the Mediator complex subunit 18 family. Component of the Mediator complex, which is composed of MED1, MED4, MED6, MED7, MED8, MED9, MED10, MED11, MED12, MED13, MED13L, MED14, MED15, MED16, MED17, MED18, MED19, MED20, MED21, MED22, MED23, MED24, MED25, MED26, MED27, MED29, MED30, MED31, CCNC, CDK8 and CDC2L6/CDK11. The MED12, MED13, CCNC and CDK8 subunits form a distinct module termed the CDK8 module. Mediator containing the CDK8 module is less active than Mediator lacking this module in supporting transcriptional activation. Individual preparations of the Mediator complex lacking one or more distinct subunits have been variously termed ARC, CRSP, DRIP, PC2, SMCC and TRAP.

It is found in the nucleus. Functionally, component of the Mediator complex, a coactivator involved in the regulated transcription of nearly all RNA polymerase II-dependent genes. Mediator functions as a bridge to convey information from gene-specific regulatory proteins to the basal RNA polymerase II transcription machinery. Mediator is recruited to promoters by direct interactions with regulatory proteins and serves as a scaffold for the assembly of a functional preinitiation complex with RNA polymerase II and the general transcription factors. The sequence is that of Mediator of RNA polymerase II transcription subunit 18 (MED18) from Bos taurus (Bovine).